The primary structure comprises 228 residues: 7-cyano-7-deazaguanine synthase (228 aa).

ATP is bound at residue Leu-7–Leu-17. 4 residues coordinate Zn(2+): Cys-192, Cys-200, Cys-203, and Cys-206.

Belongs to the QueC family. In terms of assembly, homodimer. Zn(2+) serves as cofactor.

It carries out the reaction 7-carboxy-7-deazaguanine + NH4(+) + ATP = 7-cyano-7-deazaguanine + ADP + phosphate + H2O + H(+). Its pathway is purine metabolism; 7-cyano-7-deazaguanine biosynthesis. In terms of biological role, catalyzes the ATP-dependent conversion of 7-carboxy-7-deazaguanine (CDG) to 7-cyano-7-deazaguanine (preQ(0)). The protein is 7-cyano-7-deazaguanine synthase of Desulforamulus reducens (strain ATCC BAA-1160 / DSM 100696 / MI-1) (Desulfotomaculum reducens).